The chain runs to 1412 residues: DNA-directed RNA polymerase subunit beta' (1412 aa).

Cysteine 71, cysteine 73, cysteine 86, and cysteine 89 together coordinate Zn(2+). Residues aspartate 461, aspartate 463, and aspartate 465 each contribute to the Mg(2+) site. Residues cysteine 815, cysteine 889, cysteine 896, and cysteine 899 each coordinate Zn(2+).

Belongs to the RNA polymerase beta' chain family. In terms of assembly, the RNAP catalytic core consists of 2 alpha, 1 beta, 1 beta' and 1 omega subunit. When a sigma factor is associated with the core the holoenzyme is formed, which can initiate transcription. Mg(2+) is required as a cofactor. Requires Zn(2+) as cofactor.

The enzyme catalyses RNA(n) + a ribonucleoside 5'-triphosphate = RNA(n+1) + diphosphate. DNA-dependent RNA polymerase catalyzes the transcription of DNA into RNA using the four ribonucleoside triphosphates as substrates. This is DNA-directed RNA polymerase subunit beta' from Actinobacillus pleuropneumoniae serotype 5b (strain L20).